The sequence spans 126 residues: Large ribosomal subunit protein bL20 (126 aa).

It belongs to the bacterial ribosomal protein bL20 family.

Functionally, binds directly to 23S ribosomal RNA and is necessary for the in vitro assembly process of the 50S ribosomal subunit. It is not involved in the protein synthesizing functions of that subunit. This chain is Large ribosomal subunit protein bL20, found in Parafrankia sp. (strain EAN1pec).